A 712-amino-acid polypeptide reads, in one-letter code: UvrABC system protein B (712 aa).

One can recognise a Helicase ATP-binding domain in the interval 35-421; it reads RRVQAGEKDV…SDGAVEQIIR (387 aa). 48 to 55 lines the ATP pocket; that stretch reads GATGTGKS. The Beta-hairpin motif lies at 101–124; the sequence is YYDYYQPEAYVPQSDTYIEKDSSI. The 167-residue stretch at 438–604 folds into the Helicase C-terminal domain; that stretch reads QIDDLVHEIR…PLRKKINDIV (167 aa). The tract at residues 625-655 is disordered; the sequence is TKEGKGAKAPVPALGGQKTGGAKAARGRAKE. The region spanning 667-702 is the UVR domain; the sequence is AEQIEDLTTRMRAAAADLQFEIAARLRDEVSEMKKE.

This sequence belongs to the UvrB family. As to quaternary structure, forms a heterotetramer with UvrA during the search for lesions. Interacts with UvrC in an incision complex.

It is found in the cytoplasm. Functionally, the UvrABC repair system catalyzes the recognition and processing of DNA lesions. A damage recognition complex composed of 2 UvrA and 2 UvrB subunits scans DNA for abnormalities. Upon binding of the UvrA(2)B(2) complex to a putative damaged site, the DNA wraps around one UvrB monomer. DNA wrap is dependent on ATP binding by UvrB and probably causes local melting of the DNA helix, facilitating insertion of UvrB beta-hairpin between the DNA strands. Then UvrB probes one DNA strand for the presence of a lesion. If a lesion is found the UvrA subunits dissociate and the UvrB-DNA preincision complex is formed. This complex is subsequently bound by UvrC and the second UvrB is released. If no lesion is found, the DNA wraps around the other UvrB subunit that will check the other stand for damage. The chain is UvrABC system protein B from Streptomyces coelicolor (strain ATCC BAA-471 / A3(2) / M145).